The following is a 413-amino-acid chain: Sporulation-specific protein 74 (413 aa).

A disordered region spans residues 1–87 (MGAGTLLNGL…SEHTDDFNDG (87 aa)). The segment covering 69–83 (HENKDIHERSEHTDD) has biased composition (basic and acidic residues).

As to quaternary structure, interacts with itself. Interacts with MPC54, NUD1 and SPO21/MPC70.

It localises to the cytoplasm. The protein localises to the cytoskeleton. It is found in the microtubule organizing center. The protein resides in the spindle pole body. In terms of biological role, involved in the pathway that organizes the shaping and sizing of the prospore membrane (PSM) during sporulation. Probable component of a core structural unit of the scaffold that initiates synthesis of the prospore membrane. In Saccharomyces cerevisiae (strain ATCC 204508 / S288c) (Baker's yeast), this protein is Sporulation-specific protein 74 (SPO74).